Here is a 292-residue protein sequence, read N- to C-terminus: Bifunctional protein FolD (292 aa).

NADP(+) is bound by residues 169–171 (GRS) and Ser194.

The protein belongs to the tetrahydrofolate dehydrogenase/cyclohydrolase family. Homodimer.

The enzyme catalyses (6R)-5,10-methylene-5,6,7,8-tetrahydrofolate + NADP(+) = (6R)-5,10-methenyltetrahydrofolate + NADPH. The catalysed reaction is (6R)-5,10-methenyltetrahydrofolate + H2O = (6R)-10-formyltetrahydrofolate + H(+). The protein operates within one-carbon metabolism; tetrahydrofolate interconversion. Functionally, catalyzes the oxidation of 5,10-methylenetetrahydrofolate to 5,10-methenyltetrahydrofolate and then the hydrolysis of 5,10-methenyltetrahydrofolate to 10-formyltetrahydrofolate. In Nostoc punctiforme (strain ATCC 29133 / PCC 73102), this protein is Bifunctional protein FolD.